The following is a 171-amino-acid chain: Small ribosomal subunit protein uS5 (171 aa).

The 64-residue stretch at 16–79 folds into the S5 DRBM domain; that stretch reads LIEKIVFINR…ERARKDMALV (64 aa).

The protein belongs to the universal ribosomal protein uS5 family. In terms of assembly, part of the 30S ribosomal subunit. Contacts proteins S4 and S8.

In terms of biological role, with S4 and S12 plays an important role in translational accuracy. Its function is as follows. Located at the back of the 30S subunit body where it stabilizes the conformation of the head with respect to the body. In Desulfotalea psychrophila (strain LSv54 / DSM 12343), this protein is Small ribosomal subunit protein uS5.